Reading from the N-terminus, the 718-residue chain is Probable glycerol-3-phosphate acyltransferase, mitochondrial (718 aa).

The short motif at 167 to 172 (HRSHLD) is the HXXXXD motif element. Residues 409–425 (MMCSISPVAVVSCLLLA) form a helical membrane-spanning segment.

It belongs to the GPAT/DAPAT family.

It is found in the mitochondrion membrane. It catalyses the reaction sn-glycerol 3-phosphate + an acyl-CoA = a 1-acyl-sn-glycero-3-phosphate + CoA. Its pathway is phospholipid metabolism; CDP-diacylglycerol biosynthesis; CDP-diacylglycerol from sn-glycerol 3-phosphate: step 1/3. This Caenorhabditis elegans protein is Probable glycerol-3-phosphate acyltransferase, mitochondrial (acl-6).